The primary structure comprises 237 residues: Ribonuclease PH (237 aa).

Residues arginine 86 and 124–126 contribute to the phosphate site; that span reads GTR.

Belongs to the RNase PH family. In terms of assembly, homohexameric ring arranged as a trimer of dimers.

The catalysed reaction is tRNA(n+1) + phosphate = tRNA(n) + a ribonucleoside 5'-diphosphate. Its function is as follows. Phosphorolytic 3'-5' exoribonuclease that plays an important role in tRNA 3'-end maturation. Removes nucleotide residues following the 3'-CCA terminus of tRNAs; can also add nucleotides to the ends of RNA molecules by using nucleoside diphosphates as substrates, but this may not be physiologically important. Probably plays a role in initiation of 16S rRNA degradation (leading to ribosome degradation) during starvation. In Dinoroseobacter shibae (strain DSM 16493 / NCIMB 14021 / DFL 12), this protein is Ribonuclease PH.